A 570-amino-acid chain; its full sequence is MLTDIEISRQATPQPISDIAKKFGIKKDELSQFGDAKAKVKISILDRVKDNVEGKLVIVTAVTPTPFGEGKTVTSIGLTQGLNAIGRKTCACIRQPSMGPVFGIKGGAAGGGYSQVIPMEEMNLHLTGDIHAVSSAHNLAAAAVDARLFHESRLSADEYTLQSGSAPLNIDPEQILWRRVVDHNERSLRNITVGLGDINGPVHASGFDITAASELMAILALSHDLKDMRKRIGRLVLALDKHAQPITAEMIGVAGAMTVIMSNAIEPTLMQTLTGDPCLIHAGPFANIAHGNSSIIADRIALKFADFVVTEGGFGSDMGFEKFCNIKVRESGKAPDAAVLVVTLKALKANSGLESKQDINLPDQARLEAGFLNLKWHMDNVSQYGVPVVVALNRFPSDTQEELEWLKREVMLAGAFGCEISDAFSLGANGAEALAHKVVEATEQDSDFRLLYSSDASIEAKLLTIAESGYGARGVVLSDEAKAQLEQIKAMGLDNLAVCIAKTPLSISHDPLLKGVPQGFELPIAQLKINAGAGFITALVGKVMTMPGLGVKPGYLNIDINEQDEIVGLA.

65-72 (TPFGEGKT) is a binding site for ATP.

This sequence belongs to the formate--tetrahydrofolate ligase family.

It catalyses the reaction (6S)-5,6,7,8-tetrahydrofolate + formate + ATP = (6R)-10-formyltetrahydrofolate + ADP + phosphate. Its pathway is one-carbon metabolism; tetrahydrofolate interconversion. In Shewanella woodyi (strain ATCC 51908 / MS32), this protein is Formate--tetrahydrofolate ligase.